The sequence spans 422 residues: Serine protease HTRA2, mitochondrial (422 aa).

The transit peptide at 1–17 (MALRGSHRLQVILKRCI) directs the protein to the mitochondrion. Positions 18-74 (ASPLFHSHAPNRRSSQPAIKGGEPNSNGNSGHDQQNGERKGKGWRRLVSFFVPFSLG) are excised as a propeptide. Residues 24-56 (SHAPNRRSSQPAIKGGEPNSNGNSGHDQQNGER) form a disordered region. The segment covering 41–51 (PNSNGNSGHDQ) has biased composition (polar residues). A helical membrane pass occupies residues 64–82 (LVSFFVPFSLGAVVSAAVI). Short sequence motifs (IAP-binding) lie at residues 75-78 (AVVS) and 94-97 (SKMT). A serine protease region spans residues 139–302 (SNGSGFIIEQ…IPIDYVKVFL (164 aa)). Residues His-157, Asp-189, and Ser-266 each act as charge relay system in the active site. One can recognise a PDZ domain in the interval 325–410 (MGITMLTLTP…NLDIVILRGV (86 aa)).

Belongs to the peptidase S1C family. Interacts with th/DIAP1 (via BIR 2 domain).

It is found in the mitochondrion intermembrane space. It localises to the mitochondrion membrane. It carries out the reaction Cleavage of non-polar aliphatic amino-acids at the P1 position, with a preference for Val, Ile and Met. At the P2 and P3 positions, Arg is selected most strongly with a secondary preference for other hydrophilic residues.. Serine protease that shows proteolytic activity against a non-specific substrate beta-casein. Promotes or induces cell death either by direct binding to and inhibition of BIRC proteins (also called inhibitor of apoptosis proteins, IAPs), leading to an increase in caspase activity, or by a BIRC inhibition-independent, caspase-independent and serine protease activity-dependent mechanism. Can antagonize antiapoptotic activity of th/Diap1 by directly inducing the degradation of th/Diap1. This Drosophila erecta (Fruit fly) protein is Serine protease HTRA2, mitochondrial.